We begin with the raw amino-acid sequence, 274 residues long: Triosephosphate isomerase (274 aa).

31–33 (NWK) provides a ligand contact to substrate. H118 serves as the catalytic Electrophile. E188 functions as the Proton acceptor in the catalytic mechanism. Substrate contacts are provided by residues G194, S234, and 255–256 (GG).

This sequence belongs to the triosephosphate isomerase family. In terms of assembly, homodimer.

The protein resides in the cytoplasm. The catalysed reaction is D-glyceraldehyde 3-phosphate = dihydroxyacetone phosphate. Its pathway is carbohydrate biosynthesis; gluconeogenesis. It functions in the pathway carbohydrate degradation; glycolysis; D-glyceraldehyde 3-phosphate from glycerone phosphate: step 1/1. Involved in the gluconeogenesis. Catalyzes stereospecifically the conversion of dihydroxyacetone phosphate (DHAP) to D-glyceraldehyde-3-phosphate (G3P). This chain is Triosephosphate isomerase, found in Chlamydia trachomatis serovar D (strain ATCC VR-885 / DSM 19411 / UW-3/Cx).